We begin with the raw amino-acid sequence, 396 residues long: Fumarate--(S)-2,3-diaminopropanoate ligase (396 aa).

It carries out the reaction (S)-2,3-diaminopropanoate + fumarate + ATP = N(3)-fumaroyl-(S)-2,3-diaminopropanoate + AMP + diphosphate. It functions in the pathway antibiotic biosynthesis. Functionally, involved in dapdiamide antibiotics biosynthesis. Ligates fumarate and 2,3-diaminopropionate (DAP) to form N-beta-fumaroyl-DAP. Can also form N-succinoyl-DAP from succinate and DAP, with lower efficiency. The sequence is that of Fumarate--(S)-2,3-diaminopropanoate ligase from Enterobacter agglomerans (Erwinia herbicola).